The primary structure comprises 265 residues: 4-hydroxy-tetrahydrodipicolinate reductase (265 aa).

Residues 7–12 and Asp33 each bind NAD(+); that span reads GASGRM. Residue Arg34 coordinates NADP(+). NAD(+)-binding positions include 96-98 and 120-123; these read GTT and SANM. Catalysis depends on His153, which acts as the Proton donor/acceptor. A (S)-2,3,4,5-tetrahydrodipicolinate-binding site is contributed by His154. Lys157 serves as the catalytic Proton donor. 163–164 is a (S)-2,3,4,5-tetrahydrodipicolinate binding site; that stretch reads GT.

This sequence belongs to the DapB family.

It localises to the cytoplasm. The catalysed reaction is (S)-2,3,4,5-tetrahydrodipicolinate + NAD(+) + H2O = (2S,4S)-4-hydroxy-2,3,4,5-tetrahydrodipicolinate + NADH + H(+). The enzyme catalyses (S)-2,3,4,5-tetrahydrodipicolinate + NADP(+) + H2O = (2S,4S)-4-hydroxy-2,3,4,5-tetrahydrodipicolinate + NADPH + H(+). The protein operates within amino-acid biosynthesis; L-lysine biosynthesis via DAP pathway; (S)-tetrahydrodipicolinate from L-aspartate: step 4/4. Catalyzes the conversion of 4-hydroxy-tetrahydrodipicolinate (HTPA) to tetrahydrodipicolinate. In Burkholderia pseudomallei (strain 1106a), this protein is 4-hydroxy-tetrahydrodipicolinate reductase.